The sequence spans 472 residues: F420-non-reducing hydrogenase subunit A (472 aa).

Ni(2+) is bound by residues cysteine 61, cysteine 64, cysteine 442, and cysteine 445.

It belongs to the [NiFe]/[NiFeSe] hydrogenase large subunit family. In terms of assembly, the F420-non-reducing hydrogenase is composed of three subunits; MvhA, MvhD and MvhG. It forms a complex with the heterodisulfide reductase (hdr). Ni(2+) serves as cofactor.

Part of a complex that provides reducing equivalents for heterodisulfide reductase. The polypeptide is F420-non-reducing hydrogenase subunit A (mvhA) (Methanothermobacter thermautotrophicus (strain ATCC 29096 / DSM 1053 / JCM 10044 / NBRC 100330 / Delta H) (Methanobacterium thermoautotrophicum)).